A 503-amino-acid chain; its full sequence is ATP synthase subunit alpha (503 aa).

ATP is bound at residue glycine 170–threonine 177.

This sequence belongs to the ATPase alpha/beta chains family. As to quaternary structure, F-type ATPases have 2 components, CF(1) - the catalytic core - and CF(0) - the membrane proton channel. CF(1) has five subunits: alpha(3), beta(3), gamma(1), delta(1), epsilon(1). CF(0) has three main subunits: a(1), b(2) and c(9-12). The alpha and beta chains form an alternating ring which encloses part of the gamma chain. CF(1) is attached to CF(0) by a central stalk formed by the gamma and epsilon chains, while a peripheral stalk is formed by the delta and b chains.

It localises to the cell inner membrane. The enzyme catalyses ATP + H2O + 4 H(+)(in) = ADP + phosphate + 5 H(+)(out). Functionally, produces ATP from ADP in the presence of a proton gradient across the membrane. The alpha chain is a regulatory subunit. The chain is ATP synthase subunit alpha from Helicobacter pylori (strain G27).